Consider the following 364-residue polypeptide: Aminomethyltransferase (364 aa).

The protein belongs to the GcvT family. In terms of assembly, the glycine cleavage system is composed of four proteins: P, T, L and H.

It catalyses the reaction N(6)-[(R)-S(8)-aminomethyldihydrolipoyl]-L-lysyl-[protein] + (6S)-5,6,7,8-tetrahydrofolate = N(6)-[(R)-dihydrolipoyl]-L-lysyl-[protein] + (6R)-5,10-methylene-5,6,7,8-tetrahydrofolate + NH4(+). Its function is as follows. The glycine cleavage system catalyzes the degradation of glycine. The chain is Aminomethyltransferase from Bacillus licheniformis (strain ATCC 14580 / DSM 13 / JCM 2505 / CCUG 7422 / NBRC 12200 / NCIMB 9375 / NCTC 10341 / NRRL NRS-1264 / Gibson 46).